We begin with the raw amino-acid sequence, 224 residues long: MKMKVATAEAKKVNRKRQIESEKSNGKQSFISTIFASFKNTDASIVDIAPYKRLEQKTGILVDHRNNLQVYLKVKTTDLLSMNQDDLKRFMNQLTSLCRVYHEPFKILSLTYSTETTEQQVYWKRMALRFQGRMSQEVSEKKEEHLWYQRYSLAIENLNRVLWVEKNLKELAFFIVVYGKNETELIKNVKDMKRYGGRQFNLQNMKAKEVEKLIFKLQNMNSEM.

This is an uncharacterized protein from Bacillus anthracis.